Here is a 296-residue protein sequence, read N- to C-terminus: Formamidopyrimidine-DNA glycosylase (296 aa).

P2 (schiff-base intermediate with DNA) is an active-site residue. E3 acts as the Proton donor in catalysis. K61 acts as the Proton donor; for beta-elimination activity in catalysis. The DNA site is built by H95, R122, and K169. An FPG-type zinc finger spans residues 255 to 289 (NAYGRNDQPCARCGTPIQRETFMNRSSYSCPRCQP). The Proton donor; for delta-elimination activity role is filled by R279.

Belongs to the FPG family. In terms of assembly, monomer. Requires Zn(2+) as cofactor.

It carries out the reaction Hydrolysis of DNA containing ring-opened 7-methylguanine residues, releasing 2,6-diamino-4-hydroxy-5-(N-methyl)formamidopyrimidine.. It catalyses the reaction 2'-deoxyribonucleotide-(2'-deoxyribose 5'-phosphate)-2'-deoxyribonucleotide-DNA = a 3'-end 2'-deoxyribonucleotide-(2,3-dehydro-2,3-deoxyribose 5'-phosphate)-DNA + a 5'-end 5'-phospho-2'-deoxyribonucleoside-DNA + H(+). In terms of biological role, involved in base excision repair of DNA damaged by oxidation or by mutagenic agents. Acts as a DNA glycosylase that recognizes and removes damaged bases. Has a preference for oxidized purines, such as 7,8-dihydro-8-oxoguanine (8-oxoG). Has AP (apurinic/apyrimidinic) lyase activity and introduces nicks in the DNA strand. Cleaves the DNA backbone by beta-delta elimination to generate a single-strand break at the site of the removed base with both 3'- and 5'-phosphates. The chain is Formamidopyrimidine-DNA glycosylase from Thermobifida fusca (strain YX).